A 902-amino-acid chain; its full sequence is Tiger protein B1 (902 aa).

Residues 1–24 (MKVIYIYLLLLLVCKFLFVKSSCS) form the signal peptide. At 25–803 (LKVGKIECTK…IIYSENKSTG (779 aa)) the chain is on the extracellular side. N-linked (GlcNAc...) asparagine glycosylation is found at asparagine 43, asparagine 144, asparagine 184, asparagine 223, asparagine 272, asparagine 279, asparagine 288, asparagine 358, asparagine 389, asparagine 398, asparagine 437, asparagine 559, asparagine 628, asparagine 644, asparagine 706, asparagine 753, asparagine 764, asparagine 771, and asparagine 799. Residues 249 to 323 (MEGVLNDNGG…ITIDGEYKSN (75 aa)) enclose the IPT/TIG 1 domain. 2 IPT/TIG domains span residues 603 to 680 (PIIE…ISSS) and 704 to 788 (ITNT…IFQF). The chain crosses the membrane as a helical span at residues 804-824 (FPNEMYLGFVVFVIFIALISF). Topologically, residues 825 to 902 (AAKNQIEKYF…IRRCFKEHTD (78 aa)) are cytoplasmic.

It localises to the cell membrane. Functionally, tgrB1 and tgrC1 are involved in kin discrimination. They play an essential role in aggregation and subsequent development. This Dictyostelium discoideum (Social amoeba) protein is Tiger protein B1 (tgrB1).